Consider the following 312-residue polypeptide: MNKKKFLFFLMGPTAIGKSSLALEIKKKFPLIELISVDSKLVYKGLNIGTDKPNKSDLKNFSYKLVNIVKPKNIYTVINFYNDVLKEIKNILKSGKIPLLVGGTMLYFKILLNGFANLPPSNSIIRKYIFKNICLKKKKNLFNLLKKIDPISSKKIHINDVQRVLRAVEVFFVSGGFPLSELIKFFHNKLPYKVFQFGLIPDNKEHLYKKIEKRFFFMLKSGFKKEVQNLYNQKFLDPKLPSMNSIGYKQMLLYLKNKYTYFQMIKETIKSTHKLVKHQLTWLKKWPNIIFIKDNKKDLLITKIYKILNRNL.

12–19 (GPTAIGKS) is an ATP binding site. Position 14–19 (14–19 (TAIGKS)) interacts with substrate. Interaction with substrate tRNA stretches follow at residues 38 to 41 (DSKL) and 162 to 166 (QRVLR).

It belongs to the IPP transferase family. As to quaternary structure, monomer. Mg(2+) is required as a cofactor.

The catalysed reaction is adenosine(37) in tRNA + dimethylallyl diphosphate = N(6)-dimethylallyladenosine(37) in tRNA + diphosphate. Its function is as follows. Catalyzes the transfer of a dimethylallyl group onto the adenine at position 37 in tRNAs that read codons beginning with uridine, leading to the formation of N6-(dimethylallyl)adenosine (i(6)A). In Buchnera aphidicola subsp. Cinara cedri (strain Cc), this protein is tRNA dimethylallyltransferase.